We begin with the raw amino-acid sequence, 77 residues long: Putative antitoxin VapB24 (77 aa).

Possibly the antitoxin component of a type II toxin-antitoxin (TA) system. Its cognate toxin is VapC24 (Potential). The protein is Putative antitoxin VapB24 (vapB24) of Mycobacterium tuberculosis (strain CDC 1551 / Oshkosh).